The chain runs to 621 residues: Glutathione-regulated potassium-efflux system protein KefC (621 aa).

Transmembrane regions (helical) follow at residues 4 to 24 (HTLI…PIAV), 26 to 46 (LGLG…PWGL), 54 to 74 (AILH…GLEL), 90 to 110 (GALQ…LLGL), 114 to 134 (VAEL…MQAM), 149 to 169 (FAVL…IPLL), 178 to 198 (LVAF…VVAL), 218 to 238 (VFSA…EEVG), 270 to 290 (GLLL…GTLV), 294 to 314 (LRIV…LWLI), 326 to 346 (RWFA…FGAA), and 359 to 379 (ALTL…VLLT). Residues 399 to 518 (QPRVIVAGFG…AGVEAPERET (120 aa)) form the RCK N-terminal domain. Positions 598 to 621 (GWQGTEEGRHTGDIADEPENKPSA) are disordered.

The protein belongs to the monovalent cation:proton antiporter 2 (CPA2) transporter (TC 2.A.37) family. KefC subfamily. Homodimer. Interacts with the regulatory subunit KefF.

The protein localises to the cell inner membrane. Pore-forming subunit of a potassium efflux system that confers protection against electrophiles. Catalyzes K(+)/H(+) antiport. The polypeptide is Glutathione-regulated potassium-efflux system protein KefC (Klebsiella pneumoniae (strain 342)).